A 225-amino-acid chain; its full sequence is Ribonuclease 3 (225 aa).

An RNase III domain is found at 7–129 (MPRLCRTLGY…IIGAVYIDSG (123 aa)). E42 is a binding site for Mg(2+). D46 is a catalytic residue. Mg(2+)-binding residues include D115 and E118. E118 is an active-site residue. Residues 155–225 (DPKTLLQELL…AADALELMKR (71 aa)) form the DRBM domain.

It belongs to the ribonuclease III family. As to quaternary structure, homodimer. It depends on Mg(2+) as a cofactor.

Its subcellular location is the cytoplasm. It catalyses the reaction Endonucleolytic cleavage to 5'-phosphomonoester.. Its function is as follows. Digests double-stranded RNA. Involved in the processing of primary rRNA transcript to yield the immediate precursors to the large and small rRNAs (23S and 16S). Processes some mRNAs, and tRNAs when they are encoded in the rRNA operon. Processes pre-crRNA and tracrRNA of type II CRISPR loci if present in the organism. This chain is Ribonuclease 3, found in Shewanella sediminis (strain HAW-EB3).